The following is a 512-amino-acid chain: Maturase K (512 aa).

The protein belongs to the intron maturase 2 family. MatK subfamily.

The protein localises to the plastid. Its subcellular location is the chloroplast. Usually encoded in the trnK tRNA gene intron. Probably assists in splicing its own and other chloroplast group II introns. This Amorphophallus titanum (Titan arum) protein is Maturase K.